A 387-amino-acid chain; its full sequence is Protein BTN1 (387 aa).

Positions 1–31 (MELDRDKKTFAYFWLFGLINNILYVVILSAA) are cleaved as a signal peptide. 10 helical membrane passes run 43-63 (IVLL…PFFV), 72-92 (IPIL…RSLW), 93-113 (LCLP…ITFL), 129-149 (SGTG…TTVF), 151-171 (LNIQ…LLYY), 225-245 (TVYL…LFPI), 257-276 (YVTY…TWGH), 278-298 (LPVK…LITL), 308-328 (SISW…SSYV), and 347-367 (LGSV…LGII).

Belongs to the battenin family.

The protein localises to the vacuole membrane. In terms of biological role, involved in vacuolar transport and vacuole pH homeostasis. Also required for cytokinesis. The sequence is that of Protein BTN1 (BTN1) from Kluyveromyces lactis (strain ATCC 8585 / CBS 2359 / DSM 70799 / NBRC 1267 / NRRL Y-1140 / WM37) (Yeast).